The sequence spans 906 residues: Protein translocase subunit SecA (906 aa).

ATP is bound by residues Q89, 107-111, and D502; that span reads GEGKT. Residues C890, C892, C901, and H902 each contribute to the Zn(2+) site.

It belongs to the SecA family. In terms of assembly, monomer and homodimer. Part of the essential Sec protein translocation apparatus which comprises SecA, SecYEG and auxiliary proteins SecDF-YajC and YidC. Zn(2+) serves as cofactor.

Its subcellular location is the cell inner membrane. The protein localises to the cytoplasm. The catalysed reaction is ATP + H2O + cellular proteinSide 1 = ADP + phosphate + cellular proteinSide 2.. Its function is as follows. Part of the Sec protein translocase complex. Interacts with the SecYEG preprotein conducting channel. Has a central role in coupling the hydrolysis of ATP to the transfer of proteins into and across the cell membrane, serving both as a receptor for the preprotein-SecB complex and as an ATP-driven molecular motor driving the stepwise translocation of polypeptide chains across the membrane. The protein is Protein translocase subunit SecA of Brucella canis (strain ATCC 23365 / NCTC 10854 / RM-666).